The primary structure comprises 88 residues: DNA-directed RNA polymerase subunit omega (88 aa).

It belongs to the RNA polymerase subunit omega family. As to quaternary structure, the RNAP catalytic core consists of 2 alpha, 1 beta, 1 beta' and 1 omega subunit. When a sigma factor is associated with the core the holoenzyme is formed, which can initiate transcription.

It carries out the reaction RNA(n) + a ribonucleoside 5'-triphosphate = RNA(n+1) + diphosphate. Its function is as follows. Promotes RNA polymerase assembly. Latches the N- and C-terminal regions of the beta' subunit thereby facilitating its interaction with the beta and alpha subunits. In Thermobifida fusca (strain YX), this protein is DNA-directed RNA polymerase subunit omega.